Here is a 490-residue protein sequence, read N- to C-terminus: Aspartyl/glutamyl-tRNA(Asn/Gln) amidotransferase subunit B (490 aa).

The protein belongs to the GatB/GatE family. GatB subfamily. As to quaternary structure, heterotrimer of A, B and C subunits.

It carries out the reaction L-glutamyl-tRNA(Gln) + L-glutamine + ATP + H2O = L-glutaminyl-tRNA(Gln) + L-glutamate + ADP + phosphate + H(+). It catalyses the reaction L-aspartyl-tRNA(Asn) + L-glutamine + ATP + H2O = L-asparaginyl-tRNA(Asn) + L-glutamate + ADP + phosphate + 2 H(+). Allows the formation of correctly charged Asn-tRNA(Asn) or Gln-tRNA(Gln) through the transamidation of misacylated Asp-tRNA(Asn) or Glu-tRNA(Gln) in organisms which lack either or both of asparaginyl-tRNA or glutaminyl-tRNA synthetases. The reaction takes place in the presence of glutamine and ATP through an activated phospho-Asp-tRNA(Asn) or phospho-Glu-tRNA(Gln). This Burkholderia vietnamiensis (strain G4 / LMG 22486) (Burkholderia cepacia (strain R1808)) protein is Aspartyl/glutamyl-tRNA(Asn/Gln) amidotransferase subunit B.